The primary structure comprises 562 residues: 4-coumarate--CoA ligase-like 9 (562 aa).

ATP is bound by residues S212, S213, G214, T215, T216, and K220. R281 is a CoA binding site. Residues 283 to 352 form an SBD1 region; that stretch reads ELEAMFKAVE…QKFPDVDIVQ (70 aa). ATP contacts are provided by Q352, G353, T357, D438, and R453. The interval 353 to 417 is SBD2; sequence GYGLTESSGP…LRGPVIMKGY (65 aa). CoA-binding residues include K461 and A462. K544 contacts ATP. The short motif at 560-562 is the Microbody targeting signal element; the sequence is SKL.

It belongs to the ATP-dependent AMP-binding enzyme family. Requires Mg(2+) as cofactor. As to expression, expressed at low level in leaves.

The protein resides in the peroxisome. It carries out the reaction (9S,13S,15Z)-12-oxophyto-10,15-dienoate + ATP + CoA = (10Z,15Z)-12-oxophytodienoyl-CoA + AMP + diphosphate. It catalyses the reaction hexadecanoate + ATP + CoA = hexadecanoyl-CoA + AMP + diphosphate. The enzyme catalyses (9Z)-octadecenoate + ATP + CoA = (9Z)-octadecenoyl-CoA + AMP + diphosphate. The catalysed reaction is octadecanoate + ATP + CoA = octadecanoyl-CoA + AMP + diphosphate. It carries out the reaction tetradecanoate + ATP + CoA = tetradecanoyl-CoA + AMP + diphosphate. It catalyses the reaction dodecanoate + ATP + CoA = dodecanoyl-CoA + AMP + diphosphate. The enzyme catalyses decanoate + ATP + CoA = decanoyl-CoA + AMP + diphosphate. The catalysed reaction is octanoate + ATP + CoA = octanoyl-CoA + AMP + diphosphate. It carries out the reaction (9Z,12Z)-octadecadienoate + ATP + CoA = (9Z,12Z)-octadecadienoyl-CoA + AMP + diphosphate. It catalyses the reaction (9Z,12Z,15Z)-octadecatrienoate + ATP + CoA = (9Z,12Z,15Z)-octadecatrienoyl-CoA + AMP + diphosphate. The enzyme catalyses nonanoate + ATP + CoA = nonanoyl-CoA + AMP + diphosphate. Functionally, contributes to jasmonic acid biosynthesis by initiating the beta-oxidative chain shortening of its precursors. Converts 12-oxo-phytodienoic acid (OPDA) into OPDA-CoA. Follows a two-step reaction mechanism, wherein the carboxylate substrate first undergoes adenylation by ATP, followed by a thioesterification in the presence of CoA to yield the final CoA thioester. In Arabidopsis thaliana (Mouse-ear cress), this protein is 4-coumarate--CoA ligase-like 9.